A 563-amino-acid polypeptide reads, in one-letter code: Pyruvate decarboxylase isozyme 3 (563 aa).

N-acetylserine is present on S2. D28 and H115 together coordinate pyruvate. A Glycyl lysine isopeptide (Lys-Gly) (interchain with G-Cter in ubiquitin) cross-link involves residue K212. S223 carries the phosphoserine modification. K233 participates in a covalent cross-link: Glycyl lysine isopeptide (Lys-Gly) (interchain with G-Cter in ubiquitin). Phosphothreonine is present on T266. K269 participates in a covalent cross-link: Glycyl lysine isopeptide (Lys-Gly) (interchain with G-Cter in ubiquitin). T353 bears the Phosphothreonine mark. Thiamine diphosphate contacts are provided by residues T390 and G413 to I415. D444 contacts Mg(2+). Thiamine diphosphate contacts are provided by residues G445–S446 and N471–I476. 2 residues coordinate Mg(2+): N471 and G473. E477 is a pyruvate binding site. K505 is covalently cross-linked (Glycyl lysine isopeptide (Lys-Gly) (interchain with G-Cter in ubiquitin)). T522 carries the phosphothreonine modification.

Belongs to the TPP enzyme family. Homotetramer. It depends on Mg(2+) as a cofactor. Thiamine diphosphate is required as a cofactor.

The protein localises to the cytoplasm. The enzyme catalyses pyruvate + H(+) = acetaldehyde + CO2. The catalysed reaction is 3-methyl-2-oxobutanoate + H(+) = 2-methylpropanal + CO2. It catalyses the reaction (S)-3-methyl-2-oxopentanoate + H(+) = 2-methylbutanal + CO2. It carries out the reaction indole-3-pyruvate + H(+) = indole-3-acetaldehyde + CO2. The enzyme catalyses 3-phenylpyruvate + H(+) = 2-phenylacetaldehyde + CO2. The catalysed reaction is 2-oxobutanoate + H(+) = propanal + CO2. It catalyses the reaction 2-oxopentanoate + H(+) = butanal + CO2. It carries out the reaction 2 acetaldehyde = acetoin. The enzyme catalyses acetaldehyde + pyruvate + H(+) = acetoin + CO2. The protein operates within fermentation; ethanol fermentation. Its pathway is amino-acid degradation; Ehrlich pathway. Functionally, minor of three pyruvate decarboxylases (PDC1, PDC5, PDC6) implicated in the nonoxidative conversion of pyruvate to acetaldehyde and carbon dioxide during alcoholic fermentation. Most of the produced acetaldehyde is subsequently reduced to ethanol, but some is required for cytosolic acetyl-CoA production for biosynthetic pathways. The enzyme is also one of five 2-oxo acid decarboxylases (PDC1, PDC5, PDC6, ARO10, and THI3) able to decarboxylate more complex 2-oxo acids (alpha-keto-acids) than pyruvate, which seem mainly involved in amino acid catabolism. Here the enzyme catalyzes the decarboxylation of amino acids, which, in a first step, have been transaminated to the corresponding 2-oxo acids. In a third step, the resulting aldehydes are reduced to alcohols, collectively referred to as fusel oils or alcohols. Its preferred substrates are the transaminated amino acids derived from threonine (2-oxobutanoate), norvaline (2-oxopentanoate), valine (3-methyl-2-oxobutanoate, also alpha-keto-isovalerate), isoleucine ((3S)-3-methyl-2-oxopentanoate, also alpha-keto-beta-methylvalerate), phenylalanine (phenylpyruvate), and tryptophan (3-(indol-3-yl)pyruvate), whereas transaminated leucine is no substrate. In a side-reaction the carbanionic intermediate (or active aldehyde) generated by decarboxylation or by activation of an aldehyde can react with an aldehyde via condensation (or carboligation) yielding a 2-hydroxy ketone, collectively called acyloins. The expression level of this protein in the presence of fermentable carbon sources is so low that it cannot compensate for the other two pyruvate decarboxylases to sustain fermentation. The polypeptide is Pyruvate decarboxylase isozyme 3 (PDC6) (Saccharomyces cerevisiae (strain ATCC 204508 / S288c) (Baker's yeast)).